The sequence spans 92 residues: Small ribosomal subunit protein uS19 (92 aa).

The protein belongs to the universal ribosomal protein uS19 family.

Protein S19 forms a complex with S13 that binds strongly to the 16S ribosomal RNA. This is Small ribosomal subunit protein uS19 from Leuconostoc mesenteroides subsp. mesenteroides (strain ATCC 8293 / DSM 20343 / BCRC 11652 / CCM 1803 / JCM 6124 / NCDO 523 / NBRC 100496 / NCIMB 8023 / NCTC 12954 / NRRL B-1118 / 37Y).